The sequence spans 364 residues: tRNA 2-selenouridine synthase (364 aa).

In terms of domain architecture, Rhodanese spans 14 to 137; sequence LLADTPLIDV…LRQTAIQATW (124 aa). Cysteine 97 serves as the catalytic S-selanylcysteine intermediate.

This sequence belongs to the SelU family. In terms of assembly, monomer.

The catalysed reaction is 5-methylaminomethyl-2-thiouridine(34) in tRNA + selenophosphate + (2E)-geranyl diphosphate + H2O + H(+) = 5-methylaminomethyl-2-selenouridine(34) in tRNA + (2E)-thiogeraniol + phosphate + diphosphate. The enzyme catalyses 5-methylaminomethyl-2-thiouridine(34) in tRNA + (2E)-geranyl diphosphate = 5-methylaminomethyl-S-(2E)-geranyl-thiouridine(34) in tRNA + diphosphate. It carries out the reaction 5-methylaminomethyl-S-(2E)-geranyl-thiouridine(34) in tRNA + selenophosphate + H(+) = 5-methylaminomethyl-2-(Se-phospho)selenouridine(34) in tRNA + (2E)-thiogeraniol. It catalyses the reaction 5-methylaminomethyl-2-(Se-phospho)selenouridine(34) in tRNA + H2O = 5-methylaminomethyl-2-selenouridine(34) in tRNA + phosphate. In terms of biological role, involved in the post-transcriptional modification of the uridine at the wobble position (U34) of tRNA(Lys), tRNA(Glu) and tRNA(Gln). Catalyzes the conversion of 2-thiouridine (S2U-RNA) to 2-selenouridine (Se2U-RNA). Acts in a two-step process involving geranylation of 2-thiouridine (S2U) to S-geranyl-2-thiouridine (geS2U) and subsequent selenation of the latter derivative to 2-selenouridine (Se2U) in the tRNA chain. The sequence is that of tRNA 2-selenouridine synthase from Salmonella gallinarum (strain 287/91 / NCTC 13346).